We begin with the raw amino-acid sequence, 473 residues long: Photosystem II CP43 reaction center protein (473 aa).

A propeptide spanning residues Met1–Glu14 is cleaved from the precursor. An N-acetylthreonine modification is found at Thr15. Residue Thr15 is modified to Phosphothreonine. The next 5 membrane-spanning stretches (helical) occupy residues Leu69–Ala93, Leu134–Asn155, Lys178–Thr200, Lys255–Ser275, and Trp291–Ala312. Glu367 lines the [CaMn4O5] cluster pocket. A helical membrane pass occupies residues Arg447 to Pro471.

It belongs to the PsbB/PsbC family. PsbC subfamily. PSII is composed of 1 copy each of membrane proteins PsbA, PsbB, PsbC, PsbD, PsbE, PsbF, PsbH, PsbI, PsbJ, PsbK, PsbL, PsbM, PsbT, PsbX, PsbY, PsbZ, Psb30/Ycf12, at least 3 peripheral proteins of the oxygen-evolving complex and a large number of cofactors. It forms dimeric complexes. It depends on Binds multiple chlorophylls and provides some of the ligands for the Ca-4Mn-5O cluster of the oxygen-evolving complex. It may also provide a ligand for a Cl- that is required for oxygen evolution. PSII binds additional chlorophylls, carotenoids and specific lipids. as a cofactor.

The protein resides in the plastid. It localises to the chloroplast thylakoid membrane. Its function is as follows. One of the components of the core complex of photosystem II (PSII). It binds chlorophyll and helps catalyze the primary light-induced photochemical processes of PSII. PSII is a light-driven water:plastoquinone oxidoreductase, using light energy to abstract electrons from H(2)O, generating O(2) and a proton gradient subsequently used for ATP formation. The protein is Photosystem II CP43 reaction center protein of Phaseolus vulgaris (Kidney bean).